The following is a 176-amino-acid chain: Late embryogenesis abundant protein 49 (176 aa).

2 SMP domains span residues Thr49–Lys106 and Asn115–His171.

The protein belongs to the LEA type SMP family.

It localises to the cytoplasm. The protein resides in the nucleus. In terms of biological role, LEA proteins are late embryonic proteins abundant in higher plant seed embryos. The function of those proteins is not known. The polypeptide is Late embryogenesis abundant protein 49 (Arabidopsis thaliana (Mouse-ear cress)).